The following is a 211-amino-acid chain: MARGKIQLKRIENPVHRQVTFCKRRTGLLKKAKELSVLCDAEIGVVIFSPQGKLFELATKGTMEGMIDKYMKCTGGGRGSSSATFTAQEQLQPPNLDPKDEINVLKQEIEMLQKGISYMFGGGDGAMNLEELLLLEKHLEYWISQIRSAKMDVMLQEIQSLRNKEGVLKNTNKYLLEKIEENNNSILDANFAVMETNYSYPLTMPSEIFQF.

Positions 3 to 57 constitute an MADS-box domain; sequence RGKIQLKRIENPVHRQVTFCKRRTGLLKKAKELSVLCDAEIGVVIFSPQGKLFEL. Positions 95-185 constitute a K-box domain; the sequence is NLDPKDEINV…LEKIEENNNS (91 aa).

Preferentially expressed in roots. In root meristem, expressed in external cells of columella, lateral root cap and atrichoblasts. In mature root, expressed in the central cylinder. Expressed in leaf vasculature, young floral meristems and nectaries.

Its subcellular location is the nucleus. Functionally, probable transcription activator that regulates root development by controlling cell proliferation in root meristem. May mediate responses to auxin in the root. May act as promoter of the flowering transition through up-regulation of SOC, FT and LFY. The sequence is that of Agamous-like MADS-box protein AGL12 from Arabidopsis thaliana (Mouse-ear cress).